The following is a 399-amino-acid chain: Putative endoplasmin-like protein (399 aa).

Lys-130 participates in a covalent cross-link: Glycyl lysine isopeptide (Lys-Gly) (interchain with G-Cter in SUMO2). The disordered stretch occupies residues 350–399; that stretch reads LDLAVVEEPDEEPEETAEDKEQDKDKEMDVGTDEEKQETAKESTAEKDEL. Residues 354–367 show a composition bias toward acidic residues; that stretch reads VVEEPDEEPEETAE. Positions 368–399 are enriched in basic and acidic residues; sequence DKEQDKDKEMDVGTDEEKQETAKESTAEKDEL.

The protein belongs to the heat shock protein 90 family.

Its function is as follows. Putative molecular chaperone. The sequence is that of Putative endoplasmin-like protein (HSP90B2P) from Homo sapiens (Human).